A 503-amino-acid polypeptide reads, in one-letter code: Maturase K (503 aa).

It belongs to the intron maturase 2 family. MatK subfamily.

The protein localises to the plastid. It localises to the chloroplast. Functionally, usually encoded in the trnK tRNA gene intron. Probably assists in splicing its own and other chloroplast group II introns. The chain is Maturase K from Thryptomene saxicola (Rock thryptomene).